Here is a 200-residue protein sequence, read N- to C-terminus: Recombination protein RecR (200 aa).

The segment at 59-74 (CSVCFHLSADPVCDIC) adopts a C4-type zinc-finger fold. The 95-residue stretch at 82–176 (TVICVVADSR…RVTRIAFGLP (95 aa)) folds into the Toprim domain.

The protein belongs to the RecR family.

Functionally, may play a role in DNA repair. It seems to be involved in an RecBC-independent recombinational process of DNA repair. It may act with RecF and RecO. The polypeptide is Recombination protein RecR (Acaryochloris marina (strain MBIC 11017)).